Consider the following 653-residue polypeptide: Macrolide export ATP-binding/permease protein MacB (653 aa).

The ABC transporter domain occupies 6 to 244 (LQLTRVTRRF…DAASGASGDA (239 aa)). An ATP-binding site is contributed by 42–49 (GASGSGKS). Helical transmembrane passes span 278–298 (LLTMLGIIIGITSVVSIVAIG), 526–546 (LTLLLSLIAVISLVVGGIGVM), 587–607 (MGGAIGIVLSLGMSFVFSLFV), and 616–636 (AGSIVSAFLCSTLIGVVFGFM).

Belongs to the ABC transporter superfamily. Macrolide exporter (TC 3.A.1.122) family. As to quaternary structure, homodimer.

It localises to the cell inner membrane. Functionally, non-canonical ABC transporter that contains transmembrane domains (TMD), which form a pore in the inner membrane, and an ATP-binding domain (NBD), which is responsible for energy generation. Confers resistance against macrolides. The sequence is that of Macrolide export ATP-binding/permease protein MacB from Burkholderia thailandensis (strain ATCC 700388 / DSM 13276 / CCUG 48851 / CIP 106301 / E264).